Consider the following 305-residue polypeptide: Hepatitis A virus cellular receptor 1 homolog (305 aa).

An N-terminal signal peptide occupies residues 1-21 (MNQIQVFISGLILLLPGAVDS). The Ig-like V-type domain occupies 22 to 122 (YVEVKGVVGH…PGWFNDQKVT (101 aa)). Topologically, residues 22–237 (YVEVKGVVGH…GKPQKNPTKG (216 aa)) are extracellular. Cystine bridges form between C37–C108, C49–C60, and C55–C107. A disordered region spans residues 129–185 (PEIPTRPPTRPTTTRPTATGRPTTISTRSTHVPTSIRVSTSTPPTSTHTWTHKPEPT). 2 stretches are compositionally biased toward low complexity: residues 139-152 (PTTT…RPTT) and 161-177 (PTSI…STHT). N208 is a glycosylation site (N-linked (GlcNAc...) asparagine). A helical membrane pass occupies residues 238–258 (FYVGICIAALLLLLLVSTVAI). Topologically, residues 259–305 (TRYILMKRKSASLSVVAFRVSKIEALQNAAVVHSRAEDNIYIVEDRP) are cytoplasmic.

The protein belongs to the immunoglobulin superfamily. TIM family. In terms of assembly, interacts with STAM. Interacts with SELPLG. In terms of tissue distribution, expressed by stimulated T-cells. Expressed during primary antigen stimulation. Expressed at higher levels on B rather than T-cells, both constitutively and after activation.

The protein resides in the cell membrane. Its function is as follows. Phosphatidylserine receptor that plays an important functional role in regulatory B-cells homeostasis including generation, expansion and suppressor functions. As P-selectin/SELPLG ligand, plays a specialized role in activated but not naive T-cell trafficking during inflammatory responses. Controls thereby T-cell accumulation in the inflamed central nervous system (CNS) and the induction of autoimmune disease. Also regulates expression of various anti-inflammatory cytokines and co-inhibitory ligands including IL10. Acts as a regulator of T-cell proliferation. May play a role in kidney injury and repair. This is Hepatitis A virus cellular receptor 1 homolog (Havcr1) from Mus musculus (Mouse).